A 371-amino-acid polypeptide reads, in one-letter code: tRNA-specific 2-thiouridylase MnmA (371 aa).

Residues 24-31 (AMSGGVDS) and Leu-50 contribute to the ATP site. The Nucleophile role is filled by Cys-120. A disulfide bridge connects residues Cys-120 and Cys-216. Gly-144 lines the ATP pocket. The interaction with tRNA stretch occupies residues 166–168 (KDQ). The Cysteine persulfide intermediate role is filled by Cys-216.

It belongs to the MnmA/TRMU family.

The protein localises to the cytoplasm. The catalysed reaction is S-sulfanyl-L-cysteinyl-[protein] + uridine(34) in tRNA + AH2 + ATP = 2-thiouridine(34) in tRNA + L-cysteinyl-[protein] + A + AMP + diphosphate + H(+). Functionally, catalyzes the 2-thiolation of uridine at the wobble position (U34) of tRNA, leading to the formation of s(2)U34. In Wolbachia sp. subsp. Brugia malayi (strain TRS), this protein is tRNA-specific 2-thiouridylase MnmA.